The sequence spans 302 residues: Nitrophorin Cim l NP (302 aa).

A signal peptide spans 1–20; sequence MKLLLSAGAALAFVLGLCAA. Position 80 (Cys-80) interacts with heme.

Heme b serves as cofactor. The N-terminus is blocked. In terms of tissue distribution, expressed in salivary glands.

The protein resides in the secreted. Its function is as follows. Heme-based protein that delivers nitric oxide gas (NO) to the victim while feeding, resulting in vasodilation. In place of heme, the heme-binding cysteine can also reversibly bind NO when it is present in high concentrations. The protein is Nitrophorin Cim l NP of Cimex lectularius (Bed bug).